The primary structure comprises 104 residues: Large ribosomal subunit protein bL21 (104 aa).

The protein belongs to the bacterial ribosomal protein bL21 family. Part of the 50S ribosomal subunit. Contacts protein L20.

Functionally, this protein binds to 23S rRNA in the presence of protein L20. In Streptococcus sanguinis (strain SK36), this protein is Large ribosomal subunit protein bL21.